The primary structure comprises 44 residues: Antifungal protein R (44 aa).

The protein belongs to the thaumatin family.

In terms of biological role, has antifungal activity. Inhibits the growth of Trichoderma viridae and Candida albicans. The chain is Antifungal protein R from Hordeum vulgare (Barley).